The following is a 392-amino-acid chain: Succinyl-diaminopimelate desuccinylase (392 aa).

Histidine 71 contacts Zn(2+). Residue aspartate 73 is part of the active site. Aspartate 102 provides a ligand contact to Zn(2+). Residue glutamate 144 is the Proton acceptor of the active site. 3 residues coordinate Zn(2+): glutamate 145, glutamate 173, and histidine 362.

This sequence belongs to the peptidase M20A family. DapE subfamily. Homodimer. Zn(2+) serves as cofactor. Requires Co(2+) as cofactor.

The catalysed reaction is N-succinyl-(2S,6S)-2,6-diaminopimelate + H2O = (2S,6S)-2,6-diaminopimelate + succinate. The protein operates within amino-acid biosynthesis; L-lysine biosynthesis via DAP pathway; LL-2,6-diaminopimelate from (S)-tetrahydrodipicolinate (succinylase route): step 3/3. Its function is as follows. Catalyzes the hydrolysis of N-succinyl-L,L-diaminopimelic acid (SDAP), forming succinate and LL-2,6-diaminopimelate (DAP), an intermediate involved in the bacterial biosynthesis of lysine and meso-diaminopimelic acid, an essential component of bacterial cell walls. This is Succinyl-diaminopimelate desuccinylase from Rhodospirillum rubrum (strain ATCC 11170 / ATH 1.1.1 / DSM 467 / LMG 4362 / NCIMB 8255 / S1).